Reading from the N-terminus, the 668-residue chain is Golgin subfamily A member 6-like protein 1 (668 aa).

5 disordered regions span residues 1-120 (MLMW…HQEA), 323-356 (IREQ…RQEE), 384-466 (EKMH…EMWR), 481-591 (KEKM…REQE), and 603-639 (EQEE…MRRQ). Residues 15–41 (LPTHPHLPTHPHLPTHPHLPTHPHLPT) show a composition bias toward basic residues. The segment covering 51–72 (MSKETRQSKLAEAKEQLTDHHP) has biased composition (basic and acidic residues). 2 stretches are compositionally biased toward polar residues: residues 73–83 (QTNPSVGTAAS) and 91–103 (NNGT…TSGG). Basic and acidic residues predominate over residues 106–120 (SPEDEQKASHQHQEA). Residues 177–663 (LEQALSAVAT…EEKMQEHQEH (487 aa)) are a coiled coil.

It belongs to the GOLGA6 family.

The protein is Golgin subfamily A member 6-like protein 1 (GOLGA6L1) of Homo sapiens (Human).